The primary structure comprises 87 residues: Small ribosomal subunit protein uS17 (87 aa).

The protein belongs to the universal ribosomal protein uS17 family. As to quaternary structure, part of the 30S ribosomal subunit.

Functionally, one of the primary rRNA binding proteins, it binds specifically to the 5'-end of 16S ribosomal RNA. This is Small ribosomal subunit protein uS17 from Dichelobacter nodosus (strain VCS1703A).